We begin with the raw amino-acid sequence, 332 residues long: Super small secreted glycoprotein (332 aa).

Residues 1 to 33 form the signal peptide; the sequence is MGSGYQLLQLPRERFRKTSFLVWVIILFQRAIS. Residue Asn41 is glycosylated (N-linked (GlcNAc...) asparagine; by host). 2 disulfides stabilise this stretch: Cys109–Cys136 and Cys122–Cys148. N-linked (GlcNAc...) asparagine; by host glycosylation is found at Asn205, Asn239, Asn258, and Asn269.

Belongs to the filoviruses glycoprotein family.

It is found in the secreted. This Homo sapiens (Human) protein is Super small secreted glycoprotein (GP).